The following is an 861-amino-acid chain: E3 ubiquitin-protein ligase HECTD3 (861 aa).

Ala-2 carries the post-translational modification N-acetylalanine. Residue Ser-12 is modified to Phosphoserine. The DOC domain occupies 219–397 (DEDLIHFLYD…TSLVRYPRLE (179 aa)). The 346-residue stretch at 512-857 (YEKPLDYRWP…NCVAIDTDMS (346 aa)) folds into the HECT domain. Cys-823 (glycyl thioester intermediate) is an active-site residue.

As to quaternary structure, interacts with TRIOBP. Interacts with STX8.

It localises to the cytoplasm. The protein resides in the perinuclear region. The catalysed reaction is S-ubiquitinyl-[E2 ubiquitin-conjugating enzyme]-L-cysteine + [acceptor protein]-L-lysine = [E2 ubiquitin-conjugating enzyme]-L-cysteine + N(6)-ubiquitinyl-[acceptor protein]-L-lysine.. It participates in protein modification; protein ubiquitination. In terms of biological role, E3 ubiquitin ligases accepts ubiquitin from an E2 ubiquitin-conjugating enzyme in the form of a thioester and then directly transfers the ubiquitin to targeted substrates. Mediates ubiquitination of TRIOBP and its subsequent proteasomal degradation, thus facilitating cell cycle progression by regulating the turn-over of TRIOBP. Mediates also ubiquitination of STX8. The sequence is that of E3 ubiquitin-protein ligase HECTD3 (HECTD3) from Homo sapiens (Human).